The chain runs to 139 residues: Probable DNA-binding protein (139 aa).

The segment at 97–139 is disordered; that stretch reads DEPSREASPDLGAAGAELEDESAQAGAVQGPETLRSQVLRART.

In Homo sapiens (Human), this protein is Probable DNA-binding protein.